A 71-amino-acid polypeptide reads, in one-letter code: Immune-induced peptide 18 (71 aa).

Positions 1–24 are cleaved as a signal peptide; it reads MKLIALCCLLLLGLLGFLAAPGVA. Residues 25 to 26 constitute a propeptide that is removed on maturation; that stretch reads SP. Residues 26–71 form a disordered region; it reads PSRHTGPGNGSGSGAGSGNPFRSPSSQQRPLYYDAPIGKPSKTMYA. The segment covering 32–42 has biased composition (gly residues); it reads PGNGSGSGAGS.

In terms of tissue distribution, hemolymph (at protein level).

Its subcellular location is the secreted. The polypeptide is Immune-induced peptide 18 (IM18) (Drosophila melanogaster (Fruit fly)).